The sequence spans 152 residues: HTH-type transcriptional regulator SlrR (152 aa).

Residues 6-61 (IRLYRKRKGYSINQLAVESGVSKSYLSKIERGVHTNPSVQFLKKVSATLEVELTEL) enclose the HTH cro/C1-type domain. The segment at residues 17–36 (INQLAVESGVSKSYLSKIER) is a DNA-binding region (H-T-H motif). Residues 113–151 (YRNRKLTESNIEEWKALMAEAREIGLSVHEVKSFLKTKG) enclose the Sin domain.

As to quaternary structure, component of the SlrR/SlrA complex.

In terms of biological role, represses sigma(D)-dependent flagellar genes and activate the eps and yqxM operons. Repressor activity is regulated by SlrA. Controls the initiation of biofilm formation. The sequence is that of HTH-type transcriptional regulator SlrR (slrR) from Bacillus subtilis (strain 168).